Reading from the N-terminus, the 614-residue chain is uncharacterized protein (614 aa).

This is an uncharacterized protein from Lactococcus lactis subsp. cremoris (strain MG1363).